Reading from the N-terminus, the 341-residue chain is Glyceraldehyde-3-phosphate dehydrogenase 2 (341 aa).

Residues 12–13, arginine 78, and threonine 120 contribute to the NAD(+) site; that span reads RI. D-glyceraldehyde 3-phosphate contacts are provided by residues 152 to 154 and threonine 183; that span reads SCT. Cysteine 153 (nucleophile) is an active-site residue. Residue asparagine 184 participates in NAD(+) binding. D-glyceraldehyde 3-phosphate is bound by residues arginine 198, 211 to 212, and arginine 234; that span reads TG. Asparagine 313 is a binding site for NAD(+).

It belongs to the glyceraldehyde-3-phosphate dehydrogenase family. Homotetramer.

It localises to the cytoplasm. The enzyme catalyses D-glyceraldehyde 3-phosphate + phosphate + NAD(+) = (2R)-3-phospho-glyceroyl phosphate + NADH + H(+). It participates in carbohydrate degradation; glycolysis; pyruvate from D-glyceraldehyde 3-phosphate: step 1/5. Its function is as follows. Catalyzes the oxidative phosphorylation of glyceraldehyde 3-phosphate (G3P) to 1,3-bisphosphoglycerate (BPG) using the cofactor NAD. The first reaction step involves the formation of a hemiacetal intermediate between G3P and a cysteine residue, and this hemiacetal intermediate is then oxidized to a thioester, with concomitant reduction of NAD to NADH. The reduced NADH is then exchanged with the second NAD, and the thioester is attacked by a nucleophilic inorganic phosphate to produce BPG. The chain is Glyceraldehyde-3-phosphate dehydrogenase 2 (gapA2) from Staphylococcus epidermidis (strain ATCC 12228 / FDA PCI 1200).